A 265-amino-acid polypeptide reads, in one-letter code: MIESQRHSYHLVDPSPWPISGSLGALATTVGGVMYMHSFQGGATLLSLGLIFILYTMFVWWRDVLRESTLEGHHTKVVQLGPRYGFILFIVSEVMFLFALFRASSHSSLAPTVEIGGIWPPKGIAVLDPREIPFLNTPIPLSSGAAVTWAHHAILAGKEKRAVYALVATVSLALVFTAFQGMEYYQAPSTISDSIYGSTFFLATGFHGFHVIIGTLFSIVCGIRQYLGHLTKEHHVGFEAAAWYWHFVDVVRLFPFVSIYWWGGI.

Transmembrane regions (helical) follow at residues 16 to 36 (PWPI…VMYM), 41 to 61 (GGAT…FVWW), 81 to 101 (GPRY…FALF), 162 to 182 (AVYA…FQGM), 200 to 220 (FFLA…FSIV), and 245 to 265 (WHFV…WGGI).

This sequence belongs to the cytochrome c oxidase subunit 3 family. In terms of assembly, component of the cytochrome c oxidase (complex IV, CIV), a multisubunit enzyme composed of a catalytic core of 3 subunits and several supernumerary subunits. The complex exists as a monomer or a dimer and forms supercomplexes (SCs) in the inner mitochondrial membrane with ubiquinol-cytochrome c oxidoreductase (cytochrome b-c1 complex, complex III, CIII).

The protein resides in the mitochondrion inner membrane. It catalyses the reaction 4 Fe(II)-[cytochrome c] + O2 + 8 H(+)(in) = 4 Fe(III)-[cytochrome c] + 2 H2O + 4 H(+)(out). Component of the cytochrome c oxidase, the last enzyme in the mitochondrial electron transport chain which drives oxidative phosphorylation. The respiratory chain contains 3 multisubunit complexes succinate dehydrogenase (complex II, CII), ubiquinol-cytochrome c oxidoreductase (cytochrome b-c1 complex, complex III, CIII) and cytochrome c oxidase (complex IV, CIV), that cooperate to transfer electrons derived from NADH and succinate to molecular oxygen, creating an electrochemical gradient over the inner membrane that drives transmembrane transport and the ATP synthase. Cytochrome c oxidase is the component of the respiratory chain that catalyzes the reduction of oxygen to water. Electrons originating from reduced cytochrome c in the intermembrane space (IMS) are transferred via the dinuclear copper A center (CU(A)) of subunit 2 and heme A of subunit 1 to the active site in subunit 1, a binuclear center (BNC) formed by heme A3 and copper B (CU(B)). The BNC reduces molecular oxygen to 2 water molecules using 4 electrons from cytochrome c in the IMS and 4 protons from the mitochondrial matrix. The chain is Cytochrome c oxidase subunit 3 (COX3) from Helianthus annuus (Common sunflower).